The chain runs to 180 residues: MDNHGILESLLFTAGDEGLDEKQLLEILDMSKDQLVELIENYSSHGLMIQRFGMTYVLTTKKEAATYIEQLIEQKSQMKLSQAAMEVLSIIAYNQPLSRSDIELIRSINSDGAVKTLIAKGLVEAKVVNEQRSQQLITTDLFLNVFGISNIEDLPTTEEDDEEMDAFFSNLVNQKGENND.

This sequence belongs to the ScpB family. Homodimer. Homodimerization may be required to stabilize the binding of ScpA to the Smc head domains. Component of a cohesin-like complex composed of ScpA, ScpB and the Smc homodimer, in which ScpA and ScpB bind to the head domain of Smc. The presence of the three proteins is required for the association of the complex with DNA.

The protein localises to the cytoplasm. Functionally, participates in chromosomal partition during cell division. May act via the formation of a condensin-like complex containing Smc and ScpA that pull DNA away from mid-cell into both cell halves. The protein is Segregation and condensation protein B of Staphylococcus aureus (strain USA300).